Reading from the N-terminus, the 26-residue chain is GIKDYLKKLLQKAINKIKSLRKKQDA.

In terms of tissue distribution, expressed by the venom gland.

The protein resides in the secreted. May have cytolytic and antimicrobial activity. The protein is Oxyopinin-3a of Oxyopes takobius (Lynx spider).